The chain runs to 296 residues: 4-hydroxybenzoate octaprenyltransferase (296 aa).

Helical transmembrane passes span 29 to 49 (IGIYLLLWPTLWALWVAAEGV), 55 to 75 (LFIFVFGVILMRAAGCVINDY), 102 to 122 (ALVLFAVLVTASFVLVLFTNA), 124 to 141 (TIWLSFGGLALAACYPFM), 146 to 166 (FYPQVVLGAAFSWGMPMAFTA), 169 to 189 (GSLPPEAWLLYIANLLWTVAY), 216 to 236 (ADRLIIASLQGLALLCLLLAG), 239 to 259 (FELGVWFHAGLLVAAACFVWE), and 271 to 291 (CFNAFLHNHWAGLAIFVGIVL).

This sequence belongs to the UbiA prenyltransferase family. The cofactor is Mg(2+).

Its subcellular location is the cell inner membrane. It carries out the reaction all-trans-octaprenyl diphosphate + 4-hydroxybenzoate = 4-hydroxy-3-(all-trans-octaprenyl)benzoate + diphosphate. It functions in the pathway cofactor biosynthesis; ubiquinone biosynthesis. Its function is as follows. Catalyzes the prenylation of para-hydroxybenzoate (PHB) with an all-trans polyprenyl group. Mediates the second step in the final reaction sequence of ubiquinone-8 (UQ-8) biosynthesis, which is the condensation of the polyisoprenoid side chain with PHB, generating the first membrane-bound Q intermediate 3-octaprenyl-4-hydroxybenzoate. The sequence is that of 4-hydroxybenzoate octaprenyltransferase from Ectopseudomonas mendocina (strain ymp) (Pseudomonas mendocina).